We begin with the raw amino-acid sequence, 474 residues long: ATP synthase subunit beta (474 aa).

ATP is bound at residue 151 to 158 (GGAGVGKT).

The protein belongs to the ATPase alpha/beta chains family. As to quaternary structure, F-type ATPases have 2 components, CF(1) - the catalytic core - and CF(0) - the membrane proton channel. CF(1) has five subunits: alpha(3), beta(3), gamma(1), delta(1), epsilon(1). CF(0) has three main subunits: a(1), b(2) and c(9-12). The alpha and beta chains form an alternating ring which encloses part of the gamma chain. CF(1) is attached to CF(0) by a central stalk formed by the gamma and epsilon chains, while a peripheral stalk is formed by the delta and b chains.

It is found in the cell inner membrane. The enzyme catalyses ATP + H2O + 4 H(+)(in) = ADP + phosphate + 5 H(+)(out). Produces ATP from ADP in the presence of a proton gradient across the membrane. The catalytic sites are hosted primarily by the beta subunits. The polypeptide is ATP synthase subunit beta (Ruegeria sp. (strain TM1040) (Silicibacter sp.)).